We begin with the raw amino-acid sequence, 528 residues long: Cytochrome b5 reductase 4 (528 aa).

M1 is modified (N-acetylmethionine). Positions 1–29 (MLNVPSQAFPAPGSQQRVSSQGRSKVPLK) are disordered. Residues 13 to 24 (GSQQRVSSQGRS) show a composition bias toward low complexity. The Cytochrome b5 heme-binding domain maps to 54–130 (LIEVTEEELK…LKECLVGRMA (77 aa)). The heme site is built by H89 and H112. A CS domain is found at 172–263 (LSSPSYDWFQ…KESVSWQCLG (92 aa)). The FAD-binding FR-type domain occupies 280–392 (LYYRRCQLIS…SGPEGDFKVS (113 aa)). FAD-binding positions include 372 to 387 (DRLQIGDFISVSGPEG) and 399 to 431 (DLFLLAAGTGFTPMVTVLNYALSHMSSLRKVKL).

It belongs to the flavoprotein pyridine nucleotide cytochrome reductase family. Requires FAD as cofactor. In terms of tissue distribution, ubiquitously expressed. Isoform 2 is expressed in testis, brain, skeletal muscle and in the male germline.

The protein resides in the endoplasmic reticulum. The enzyme catalyses 2 Fe(III)-[cytochrome b5] + NADH = 2 Fe(II)-[cytochrome b5] + NAD(+) + H(+). NADH-cytochrome b5 reductase involved in endoplasmic reticulum stress response pathway. Plays a critical role in protecting pancreatic beta-cells against oxidant stress, possibly by protecting the cell from excess buildup of reactive oxygen species (ROS). This is Cytochrome b5 reductase 4 (Cyb5r4) from Mus musculus (Mouse).